Consider the following 387-residue polypeptide: Protein RecA (387 aa).

78–85 lines the ATP pocket; the sequence is GPESSGKT. A compositionally biased stretch (basic and acidic residues) spans 355–369; the sequence is KSIERDTKETKETKS. The disordered stretch occupies residues 355-387; sequence KSIERDTKETKETKSKQPVSFSTEADGDIAVGE.

It belongs to the RecA family.

The protein localises to the cytoplasm. Functionally, can catalyze the hydrolysis of ATP in the presence of single-stranded DNA, the ATP-dependent uptake of single-stranded DNA by duplex DNA, and the ATP-dependent hybridization of homologous single-stranded DNAs. It interacts with LexA causing its activation and leading to its autocatalytic cleavage. The chain is Protein RecA from Leptospira biflexa serovar Patoc (strain Patoc 1 / ATCC 23582 / Paris).